The chain runs to 848 residues: Glutenin, high molecular weight subunit DX5 (848 aa).

A signal peptide spans 1–21; it reads MAKRLVLFVAVVVALVALTVA. Residues 124–804 are disordered; that stretch reads YYPGQASPQR…GQQSGQGQQG (681 aa). 13 stretches are compositionally biased toward low complexity: residues 126-137, 145-166, 173-203, 210-240, 263-303, 310-351, 359-411, 419-468, 476-527, 544-659, 670-687, 709-727, and 739-795; these read PGQASPQRPGQG, QGYY…QGQP, PQQS…GQPG, QLQP…PGQG, QGQQ…GQSG, QQPG…PGQG, PGYY…PGQG, QGQQ…YPTS, QQPG…QGQP, GQGQ…GQPG, QQPG…GQGQ, and GQGQ…TGQG.

The protein belongs to the gliadin/glutenin family. As to quaternary structure, disulfide-bridge linked aggregates.

Glutenins are high-molecular weight seed storage proteins of wheat endosperm. Thought to be responsible for the visco-elastic property of wheat dough. The protein is Glutenin, high molecular weight subunit DX5 (GLU-1D-1D) of Triticum aestivum (Wheat).